The chain runs to 530 residues: Glucose-6-phosphate isomerase (530 aa).

Catalysis depends on glutamate 335, which acts as the Proton donor. Catalysis depends on residues histidine 366 and lysine 495.

This sequence belongs to the GPI family.

Its subcellular location is the cytoplasm. The catalysed reaction is alpha-D-glucose 6-phosphate = beta-D-fructose 6-phosphate. It participates in carbohydrate biosynthesis; gluconeogenesis. Its pathway is carbohydrate degradation; glycolysis; D-glyceraldehyde 3-phosphate and glycerone phosphate from D-glucose: step 2/4. Catalyzes the reversible isomerization of glucose-6-phosphate to fructose-6-phosphate. This chain is Glucose-6-phosphate isomerase, found in Roseobacter denitrificans (strain ATCC 33942 / OCh 114) (Erythrobacter sp. (strain OCh 114)).